The sequence spans 59 residues: UPF0434 protein VV1_2087 (59 aa).

The protein belongs to the UPF0434 family.

The chain is UPF0434 protein VV1_2087 from Vibrio vulnificus (strain CMCP6).